Consider the following 140-residue polypeptide: Ergosterol biosynthetic protein 28 homolog (140 aa).

A run of 4 helical transmembrane segments spans residues 4-24, 52-72, 79-99, and 105-125; these read FLNV…GNTL, TFGI…IDIH, ITLW…FVYG, and IGVL…LVGL.

This sequence belongs to the ERG28 family. In terms of tissue distribution, ubiquitous; strongly expressed in testis and some cancer cell lines.

The protein resides in the endoplasmic reticulum membrane. The protein is Ergosterol biosynthetic protein 28 homolog of Homo sapiens (Human).